A 124-amino-acid chain; its full sequence is KETAAAKFERQHMDSSTSSASSSNYCNQMMKSRSMTQNRCKPVBTFVHZSLABVQAVCSZKBVACKBGZTBCYZSYSTMSITBCRZTGSSKYPBCAYTTTZAKKHIIVACZGBPYVPVHFBASV.

The segment covering 1-13 (KETAAAKFERQHM) has biased composition (basic and acidic residues). The segment at 1–24 (KETAAAKFERQHMDSSTSSASSSN) is disordered. The substrate site is built by K7 and R10. The active-site Proton acceptor is H12. 4 disulfide bridges follow: C26-C84, C40-C95, C58-C110, and C65-C72. Residues 41 to 45 (KPVBT), K66, and R85 contribute to the substrate site. H119 acts as the Proton donor in catalysis.

Belongs to the pancreatic ribonuclease family. In terms of assembly, monomer. Interacts with and forms tight 1:1 complexes with RNH1. Dimerization of two such complexes may occur. Interaction with RNH1 inhibits this protein. Pancreas.

It is found in the secreted. It catalyses the reaction an [RNA] containing cytidine + H2O = an [RNA]-3'-cytidine-3'-phosphate + a 5'-hydroxy-ribonucleotide-3'-[RNA].. The catalysed reaction is an [RNA] containing uridine + H2O = an [RNA]-3'-uridine-3'-phosphate + a 5'-hydroxy-ribonucleotide-3'-[RNA].. Its function is as follows. Endonuclease that catalyzes the cleavage of RNA on the 3' side of pyrimidine nucleotides. Acts on single-stranded and double-stranded RNA. This chain is Ribonuclease pancreatic (RNASE1), found in Boselaphus tragocamelus (Nilgai).